Consider the following 1041-residue polypeptide: MSSDAMSDYSHDDEHDPQTDELRETALVTLEALISSCSSQMQSYLPNTINSALRFLKYDPNVADMGEDEEMSGTQDDGSEDDVTEEPDLEDDDFEDFEEEGGYSDIDDMSWKVRRCAAKLLYAVISTYGRGRALDDTSLYQQIAPAIVARFNKEREESVKLELVSTMDALVRKTAEGSMIMTSSGFLESVGSGSKISRKRRRQDSDASMIDFEPSMGTSSAAGTPLAAPSSPQSGPQSELANALPVIVRSLVTMWKQASIHLKQAIIILLKSLALVRYGGLADHLQQIEDPIADVLKSSLSGAPSASIGISASAGTLQIETLSLISAISETHASDALLPFLIALIPGVIVAVNDKNYKVSSEALAAVEQIVKALTPPRVTTASQDLIFQLEKLYDVSHSRITDTSADLEVRQRAIHVLGVLLARTSDEQGSAFLSFEKRSKGLVTLVDRLKNETTRLSAVRAIDDVAVLCSRKDDVDSNWVREVTAELGAQLRKSDRVLRSASLETLRSLSMNPNTRAHYDGETMKNLEECLIPLISVEDVHLLAPSLIIIAKLVPGNAQLLVNDGLVSAICSIVRTSLAGTVLKALLLLVKVIGEEGSGLTLMQNLLQDVGVNGDTSVVGRSIGTLLVHGGSNVGVRMEDFLSELQKTQDPQRQCLALAILGESALRLGASCSLTPNVFIPHFNSKSEKVRLASATALGNAAAGNVKAYLPTILGGLEKSDPQSYLLLHSVKELLQHPEMVRRDVAPSALKLWQALLVVSKEEDNRAMGAECVGRLALLDPPAYIPQFQEYLANGDAGIRSIVVSAFRFTLSDSRDVFNDVLRPLIVPLLVNMLSDRDLGNHRLALTTLNSAIHNKLALILPHLGELLPAVLGDTQIKPELIREVQMGPFKHKVDDGLELRKSAYETVYAALDTSFSLSHITELYSRILAGIDDEQDIRTICNLMTSKLITLAPEETQRHLDALSERYTAILNFKPKENAVKQEIEKAQEASTGVLKITRELSKAFPNAETMGDHHKWKAYMEMVRAQFGTQLSNLESEF.

2 disordered regions span residues 1 to 24 (MSSDAMSDYSHDDEHDPQTDELRE) and 64 to 103 (DMGEDEEMSGTQDDGSEDDVTEEPDLEDDDFEDFEEEGGY). Over residues 9 to 24 (YSHDDEHDPQTDELRE) the composition is skewed to basic and acidic residues. Residues 65-103 (MGEDEEMSGTQDDGSEDDVTEEPDLEDDDFEDFEEEGGY) show a composition bias toward acidic residues. An HEAT 1 repeat occupies 138–176 (SLYQQIAPAIVARFNKEREESVKLELVSTMDALVRKTAE). The segment at 189–237 (SVGSGSKISRKRRRQDSDASMIDFEPSMGTSSAAGTPLAAPSSPQSGPQ) is disordered. The segment covering 225-237 (PLAAPSSPQSGPQ) has biased composition (low complexity). HEAT repeat units follow at residues 242 to 279 (NALPVIVRSLVTMWKQASIHLKQAIIILLKSLALVRYG), 339 to 376 (PFLIALIPGVIVAVNDKNYKVSSEALAAVEQIVKALTP), 434 to 472 (LSFEKRSKGLVTLVDRLKNETTRLSAVRAIDDVAVLCSR), 479 to 516 (NWVREVTAELGAQLRKSDRVLRSASLETLRSLSMNPNT), 525 to 560 (MKNLEECLIPLISVEDVHLLAPSLIIIAKLVPGNAQ), 598 to 637 (GSGLTLMQNLLQDVGVNGDTSVVGRSIGTLLVHGGSNVGV), 670 to 708 (GASCSLTPNVFIPHFNSKSEKVRLASATALGNAAAGNVK), 710 to 744 (YLPTILGGLEKSDPQSYLLLHSVKELLQHPEMVRR), 780 to 817 (LDPPAYIPQFQEYLANGDAGIRSIVVSAFRFTLSDSRD), and 822 to 867 (VLRP…HLGE).

Belongs to the CAND family. As to quaternary structure, interacts with candA-N. Interacts with unneddylated cullins culA and culD.

It localises to the nucleus. In terms of biological role, assembly factor of SCF (SKP1-CUL1-F-box protein) E3 ubiquitin ligase complexes that promotes the exchange of the substrate-recognition F-box subunit in SCF complexes, thereby playing a key role in the cellular repertoire of SCF complexes. Acts as a F-box protein exchange factor when interacting with candA-N. This Emericella nidulans (strain FGSC A4 / ATCC 38163 / CBS 112.46 / NRRL 194 / M139) (Aspergillus nidulans) protein is Cullin-associated NEDD8-dissociated protein 1, C-terminal part (candA-C).